Reading from the N-terminus, the 195-residue chain is Imidazoleglycerol-phosphate dehydratase (195 aa).

Belongs to the imidazoleglycerol-phosphate dehydratase family.

It localises to the cytoplasm. The catalysed reaction is D-erythro-1-(imidazol-4-yl)glycerol 3-phosphate = 3-(imidazol-4-yl)-2-oxopropyl phosphate + H2O. It participates in amino-acid biosynthesis; L-histidine biosynthesis; L-histidine from 5-phospho-alpha-D-ribose 1-diphosphate: step 6/9. This chain is Imidazoleglycerol-phosphate dehydratase, found in Azoarcus sp. (strain BH72).